A 100-amino-acid chain; its full sequence is Small ribosomal subunit protein uS17 (100 aa).

Belongs to the universal ribosomal protein uS17 family. As to quaternary structure, part of the 30S ribosomal subunit.

One of the primary rRNA binding proteins, it binds specifically to the 5'-end of 16S ribosomal RNA. The chain is Small ribosomal subunit protein uS17 from Erythrobacter litoralis (strain HTCC2594).